The following is a 179-amino-acid chain: Large ribosomal subunit protein uL5 (179 aa).

The protein belongs to the universal ribosomal protein uL5 family. As to quaternary structure, part of the 50S ribosomal subunit; part of the 5S rRNA/L5/L18/L25 subcomplex. Contacts the 5S rRNA and the P site tRNA. Forms a bridge to the 30S subunit in the 70S ribosome.

Functionally, this is one of the proteins that bind and probably mediate the attachment of the 5S RNA into the large ribosomal subunit, where it forms part of the central protuberance. In the 70S ribosome it contacts protein S13 of the 30S subunit (bridge B1b), connecting the 2 subunits; this bridge is implicated in subunit movement. Contacts the P site tRNA; the 5S rRNA and some of its associated proteins might help stabilize positioning of ribosome-bound tRNAs. The protein is Large ribosomal subunit protein uL5 of Neisseria meningitidis serogroup A / serotype 4A (strain DSM 15465 / Z2491).